Reading from the N-terminus, the 332-residue chain is Putative ankyrin repeat protein R896 (332 aa).

ANK repeat units lie at residues 159–188 (GNDNAMIIAAQKGNLEIVKFLVESGANVKS), 190–218 (DNCAVRLASEFGHLDVVEYLYKSGANVKA), 219–248 (DGNYAITWACKNGHLPVIEFLTSVGADIKA), 249–278 (AQNLPIKMAAIGGHLNVIKYLVDRGANIST), and 280–308 (NDYVFNIACRNGHTDLAEYAVSLGADIFS).

This Acanthamoeba polyphaga mimivirus (APMV) protein is Putative ankyrin repeat protein R896.